Here is a 254-residue protein sequence, read N- to C-terminus: Tyrosine-protein phosphatase YwqE (254 aa).

It belongs to the metallo-dependent hydrolases superfamily. CpsB/CapC family. It depends on Mn(2+) as a cofactor.

The enzyme catalyses O-phospho-L-tyrosyl-[protein] + H2O = L-tyrosyl-[protein] + phosphate. Inhibited by vanadate and sodium pyrophosphate. Not inhibited by sodium fluoride. Dephosphorylates the phosphotyrosine-containing proteins YwqD, YwqF and Ssb. This chain is Tyrosine-protein phosphatase YwqE (ywqE), found in Bacillus subtilis (strain 168).